An 88-amino-acid chain; its full sequence is ATP synthase epsilon chain (88 aa).

Belongs to the ATPase epsilon chain family. As to quaternary structure, F-type ATPases have 2 components, CF(1) - the catalytic core - and CF(0) - the membrane proton channel. CF(1) has five subunits: alpha(3), beta(3), gamma(1), delta(1), epsilon(1). CF(0) has three main subunits: a, b and c.

It is found in the cell inner membrane. Its function is as follows. Produces ATP from ADP in the presence of a proton gradient across the membrane. In Chlorobium limicola, this protein is ATP synthase epsilon chain (atpC).